The sequence spans 545 residues: Methionine--tRNA ligase (545 aa).

The short motif at 15–25 (PYANGPIHLGH) is the 'HIGH' region element. Zn(2+)-binding residues include C146, C149, C159, and C162. The 'KMSKS' region motif lies at 332–336 (KMSKS). K335 is an ATP binding site.

The protein belongs to the class-I aminoacyl-tRNA synthetase family. MetG type 1 subfamily. In terms of assembly, monomer. It depends on Zn(2+) as a cofactor.

The protein resides in the cytoplasm. The enzyme catalyses tRNA(Met) + L-methionine + ATP = L-methionyl-tRNA(Met) + AMP + diphosphate. In terms of biological role, is required not only for elongation of protein synthesis but also for the initiation of all mRNA translation through initiator tRNA(fMet) aminoacylation. The protein is Methionine--tRNA ligase of Hamiltonella defensa subsp. Acyrthosiphon pisum (strain 5AT).